A 130-amino-acid chain; its full sequence is Small ribosomal subunit protein uS9 (130 aa).

Belongs to the universal ribosomal protein uS9 family.

The sequence is that of Small ribosomal subunit protein uS9 from Shewanella amazonensis (strain ATCC BAA-1098 / SB2B).